We begin with the raw amino-acid sequence, 217 residues long: Nucleoredoxin-like protein 1 (217 aa).

The Thioredoxin domain occupies methionine 1–leucine 164. Residues valine 188–glycine 204 are compositionally biased toward basic and acidic residues. Residues valine 188–tryptophan 217 are disordered.

Belongs to the nucleoredoxin family. Interacts with isoform 1 of BSG. In terms of tissue distribution, expressed in the retina (at protein level). Expressed predominantly by photoreceptors in both the inner and outer nuclear layer (at protein level). Not expressed in the testis, spleen, intestine, lung, cerebellum, or kidney.

The protein localises to the cell projection. It is found in the cilium. Its subcellular location is the photoreceptor outer segment. Its function is as follows. Plays an important role in retinal cone photoreceptor survival. In association with glucose transporter SLC16A1/GLUT1 and BSG, promotes retinal cone survival by enhancing aerobic glycolysis and accelerating the entry of glucose into photoreceptors. May play a role in cone cell viability, slowing down cone degeneration, does not seem to play a role in degenerating rods. The polypeptide is Nucleoredoxin-like protein 1 (Nxnl1) (Mus musculus (Mouse)).